The primary structure comprises 364 residues: Dihydroorotate dehydrogenase (quinone) (364 aa).

Residues 61-65 (AGYDK) and Thr85 contribute to the FMN site. Lys65 provides a ligand contact to substrate. 110 to 114 (NRLGF) provides a ligand contact to substrate. FMN is bound by residues Asn139 and Asn170. Residue Asn170 participates in substrate binding. The active-site Nucleophile is the Ser173. Asn175 is a substrate binding site. The FMN site is built by Lys215 and Ser243. Substrate is bound at residue 244–245 (NT). FMN is bound by residues Gly266, Gly295, and 316-317 (YT).

It belongs to the dihydroorotate dehydrogenase family. Type 2 subfamily. As to quaternary structure, monomer. The cofactor is FMN.

It is found in the cell membrane. The enzyme catalyses (S)-dihydroorotate + a quinone = orotate + a quinol. It participates in pyrimidine metabolism; UMP biosynthesis via de novo pathway; orotate from (S)-dihydroorotate (quinone route): step 1/1. Its function is as follows. Catalyzes the conversion of dihydroorotate to orotate with quinone as electron acceptor. In Brucella abortus (strain S19), this protein is Dihydroorotate dehydrogenase (quinone).